Reading from the N-terminus, the 505-residue chain is Sodium-coupled neutral amino acid transporter 3 (505 aa).

The segment at 27-48 (VPTTDTQRTEDTQHCGEGKGFL) is disordered. Over residues 33–43 (QRTEDTQHCGE) the composition is skewed to basic and acidic residues. A glycan (N-linked (GlcNAc...) asparagine) is linked at asparagine 73. A run of 5 helical transmembrane segments spans residues 82 to 102 (GILGLAYAMANTGIILFLFLL), 105 to 125 (VALLSSYSIHLLLKSSGIVGI), 143 to 163 (AAALAITLQNIGAMSSYLYII), 186 to 206 (MDGNYLVILVSVTIILPLALM), and 212 to 232 (LGYSSGFSLSCMVFFLIAVIY). Cysteines 239 and 276 form a disulfide. Asparagine 247 and asparagine 251 each carry an N-linked (GlcNAc...) asparagine glycan. The chain crosses the membrane as a helical span at residues 288–308 (AYTIPIMAFAFVCHPEVLPIY). Asparagine 324 carries N-linked (GlcNAc...) asparagine glycosylation. The next 5 membrane-spanning stretches (helical) occupy residues 325-345 (LSIAVMYVMYFLAALFGYLTF), 367-387 (ILCVRVAVLIAVTLTVPIVLF), 409-429 (VLIATGLLTCINLLVIFAPNI), 432-452 (IFGIIGATSAPCLIFIFPAIF), and 472-492 (ALCFAAVGFLLMTMSLSFIII).

Belongs to the amino acid/polyamine transporter 2 family. In terms of tissue distribution, expressed predominantly in liver, moderately expressed in kidney and brain, and barely detectable in heart and muscle. Within liver, expressed in hepatocytes. Not detected in testis. Expressed in cells of the ganglion cell layer, in soma of some cells of the inner nuclear layer (at protein level). Expressed in the inner segments of photoreceptor cells.

The protein localises to the cell membrane. It is found in the basolateral cell membrane. The catalysed reaction is L-histidine(out) + Na(+)(out) + H(+)(in) = L-histidine(in) + Na(+)(in) + H(+)(out). It carries out the reaction L-glutamine(out) + Na(+)(out) + H(+)(in) = L-glutamine(in) + Na(+)(in) + H(+)(out). The enzyme catalyses L-asparagine(out) + Na(+)(out) + H(+)(in) = L-asparagine(in) + Na(+)(in) + H(+)(out). Symporter that cotransports specific neutral amino acids and sodium ions, coupled to an H(+) antiporter activity. Mainly participates in the glutamate-GABA-glutamine cycle in brain where it transports L-glutamine from astrocytes in the intercellular space for the replenishment of both neurotransmitters glutamate and gamma-aminobutyric acid (GABA) in neurons and also functions as the major influx transporter in ganglion cells mediating the uptake of glutamine. The transport activity is specific for L-glutamine, L-histidine and L-asparagine. The transport is electroneutral coupled to the cotransport of 1 Na(+) and the antiport of 1 H(+). The transport is pH dependent, saturable, Li(+) tolerant and functions in both direction depending on the concentration gradients of its substrates and cotransported ions. Also mediates an amino acid-gated H(+) conductance that is not stoichiometrically coupled to the amino acid transport but which influences the ionic gradients that drive the amino acid transport. In addition, may play a role in nitrogen metabolism, amino acid homeostasis, glucose metabolism and renal ammoniagenesis. This chain is Sodium-coupled neutral amino acid transporter 3, found in Mus musculus (Mouse).